A 265-amino-acid chain; its full sequence is Phosphate import ATP-binding protein PstB (265 aa).

In terms of domain architecture, ABC transporter spans 18 to 260; it reads IAAKGVNVYY…PEDPRTESYI (243 aa). 50–57 is an ATP binding site; that stretch reads GPSGCGKS.

This sequence belongs to the ABC transporter superfamily. Phosphate importer (TC 3.A.1.7) family. As to quaternary structure, the complex is composed of two ATP-binding proteins (PstB), two transmembrane proteins (PstC and PstA) and a solute-binding protein (PstS).

Its subcellular location is the cell inner membrane. The catalysed reaction is phosphate(out) + ATP + H2O = ADP + 2 phosphate(in) + H(+). Functionally, part of the ABC transporter complex PstSACB involved in phosphate import. Responsible for energy coupling to the transport system. The polypeptide is Phosphate import ATP-binding protein PstB (Ruegeria sp. (strain TM1040) (Silicibacter sp.)).